A 206-amino-acid chain; its full sequence is Large ribosomal subunit protein uL4 (206 aa).

The interval 43 to 78 (ARSGNRKQKDREEVKHTTKKPWRQKGTGRARAGMSS) is disordered. The span at 49 to 58 (KQKDREEVKH) shows a compositional bias: basic and acidic residues. The segment covering 59–70 (TTKKPWRQKGTG) has biased composition (basic residues).

This sequence belongs to the universal ribosomal protein uL4 family. In terms of assembly, part of the 50S ribosomal subunit.

In terms of biological role, one of the primary rRNA binding proteins, this protein initially binds near the 5'-end of the 23S rRNA. It is important during the early stages of 50S assembly. It makes multiple contacts with different domains of the 23S rRNA in the assembled 50S subunit and ribosome. Functionally, forms part of the polypeptide exit tunnel. This is Large ribosomal subunit protein uL4 from Ralstonia nicotianae (strain ATCC BAA-1114 / GMI1000) (Ralstonia solanacearum).